The following is a 1565-amino-acid chain: Synemin (1565 aa).

The tract at residues 1 to 10 (MLSWRLQTGP) is head. The interval 11 to 49 (EKAELQELNARLYDYVCRVRELERENLLLEEELRGRRGR) is coil 1A. The segment at 11–320 (EKAELQELNA…YRALLEGESN (310 aa)) is interaction with DMD and UTRN. The region spanning 11 to 322 (EKAELQELNA…ALLEGESNPE (312 aa)) is the IF rod domain. The segment at 50–58 (EGLWAEGQA) is linker 1. The coil 1B stretch occupies residues 59 to 163 (RCAEEARSLR…ELRARAASLT (105 aa)). The interval 164–186 (MHFRARATGPAAPPPRLREVHDS) is linker 12. The coil 2 stretch occupies residues 187-300 (YALLVAESWR…LRDYQDLLQV (114 aa)). The interval 301–1565 (KTGLSLEVAT…EEEENDGHWF (1265 aa)) is tail. The interval 401 to 421 (SGYSSSATTQQENSYGKAVSS) is disordered. A compositionally biased stretch (polar residues) spans 402–421 (GYSSSATTQQENSYGKAVSS). Residue S429 is modified to Phosphoserine. Residues 472-609 (YRDRRDKVAA…VKDAGGGTGR (138 aa)) form a disordered region. A compositionally biased stretch (basic and acidic residues) spans 498–577 (KKTEVKATRE…KEKSVREREV (80 aa)). Residues T598 and T651 each carry the phosphothreonine modification. 2 positions are modified to phosphoserine: S653 and S777. Positions 1019–1040 (LSKDEASEMEKAVESVVRESLS) are enriched in basic and acidic residues. The interval 1019-1060 (LSKDEASEMEKAVESVVRESLSRQRSPAPGSPDEEGGAEAPA) is disordered. Residues S1044, S1049, S1077, S1087, S1181, and S1184 each carry the phosphoserine modification. Positions 1080-1105 (SEVAGGASHSSGQRTPQGPVSATVEV) are disordered. The segment covering 1087–1105 (SHSSGQRTPQGPVSATVEV) has biased composition (polar residues). The interaction with TLN1 and VCL stretch occupies residues 1152 to 1463 (VSAGGDLSQA…GPKETSFTFQ (312 aa)). Disordered stretches follow at residues 1198-1221 (EAWG…GRHS) and 1332-1415 (QLGE…ETSE). The tract at residues 1244-1563 (GKVGDYFATE…DNEEEENDGH (320 aa)) is interaction with DMD and UTRN. The span at 1354 to 1379 (ATHSHTSGRQTVMTEKSTFQSVVSES) shows a compositional bias: polar residues. A Phosphoserine modification is found at S1435. R1487 carries the omega-N-methylarginine modification. The interval 1505–1525 (FKASAGEGDQAHREQGKEQAM) is disordered. A compositionally biased stretch (basic and acidic residues) spans 1513-1525 (DQAHREQGKEQAM).

The protein belongs to the intermediate filament family. As to quaternary structure, interacts with GFAP and VIM. Isoform 1 interacts with TLN1 and VCL. Isoform 2 interacts with DES and DTNA. Isoform 1 and isoform 2 interact with DMD and UTRN. In terms of tissue distribution, isoform 2 is strongly detected in adult heart, fetal skeletal muscles and fetal heart. Isoform 1 is weakly detected in fetal heart and also in fetal skeletal muscle. Isoform 1 and isoform 2 are detected in adult bladder (at protein level). The mRNA is predominantly expressed in heart and muscle with some expression in brain which may be due to tissue-specific isoforms.

The protein resides in the cytoplasm. It localises to the cytoskeleton. Its subcellular location is the cell junction. The protein localises to the adherens junction. In terms of biological role, type-VI intermediate filament (IF) which plays an important cytoskeletal role within the muscle cell cytoskeleton. It forms heteromeric IFs with desmin and/or vimentin, and via its interaction with cytoskeletal proteins alpha-dystrobrevin, dystrophin, talin-1, utrophin and vinculin, is able to link these heteromeric IFs to adherens-type junctions, such as to the costameres, neuromuscular junctions, and myotendinous junctions within striated muscle cells. The sequence is that of Synemin from Homo sapiens (Human).